We begin with the raw amino-acid sequence, 448 residues long: Chaperone SurA (448 aa).

The N-terminal stretch at 1 to 27 (MKKTLRFAAVASGLVASLITVAPSASA) is a signal peptide. 2 consecutive PpiC domains span residues 185–288 (QQDL…RLVE) and 301–399 (IVQT…QVLG).

Its subcellular location is the periplasm. The enzyme catalyses [protein]-peptidylproline (omega=180) = [protein]-peptidylproline (omega=0). In terms of biological role, chaperone involved in the correct folding and assembly of outer membrane proteins. Recognizes specific patterns of aromatic residues and the orientation of their side chains, which are found more frequently in integral outer membrane proteins. May act in both early periplasmic and late outer membrane-associated steps of protein maturation. The sequence is that of Chaperone SurA from Burkholderia pseudomallei (strain 1710b).